Here is a 180-residue protein sequence, read N- to C-terminus: Large ribosomal subunit protein uL6 (180 aa).

The protein belongs to the universal ribosomal protein uL6 family. As to quaternary structure, part of the 50S ribosomal subunit.

Functionally, this protein binds to the 23S rRNA, and is important in its secondary structure. It is located near the subunit interface in the base of the L7/L12 stalk, and near the tRNA binding site of the peptidyltransferase center. The protein is Large ribosomal subunit protein uL6 of Clostridium botulinum (strain ATCC 19397 / Type A).